We begin with the raw amino-acid sequence, 226 residues long: Thymidylate kinase (226 aa).

9–16 (GPEGSGKS) is an ATP binding site.

The protein belongs to the thymidylate kinase family.

It carries out the reaction dTMP + ATP = dTDP + ADP. Functionally, phosphorylation of dTMP to form dTDP in both de novo and salvage pathways of dTTP synthesis. This chain is Thymidylate kinase, found in Roseiflexus sp. (strain RS-1).